Reading from the N-terminus, the 210-residue chain is Guanylate kinase (210 aa).

Positions 6–186 (GVILVLSSPS…TADRISNILR (181 aa)) constitute a Guanylate kinase-like domain. 13-20 (SPSGCGKT) serves as a coordination point for ATP.

It belongs to the guanylate kinase family.

The protein resides in the cytoplasm. The enzyme catalyses GMP + ATP = GDP + ADP. Functionally, essential for recycling GMP and indirectly, cGMP. The protein is Guanylate kinase of Anaplasma phagocytophilum (strain HZ).